The following is a 686-amino-acid chain: Asparagine-rich protein (686 aa).

The N-terminal stretch at 1–18 (MKGTSALLLIGFFHATIS) is a signal peptide. Disordered regions lie at residues 34–73 (KRGNLNTGGQITSNSAILGDVNAGSKLSEPPKRRNTDKTA), 125–148 (SLTSDTKTTTRTSQTSSTRASSSI), and 201–236 (ITRQKSENTQGNSIVRNGGTNSLNIPSSTRRSQPPN). A compositionally biased stretch (polar residues) spans 37 to 49 (NLNTGGQITSNSA). Basic and acidic residues predominate over residues 62 to 73 (EPPKRRNTDKTA).

In terms of tissue distribution, prismatic layer of shell (at protein level). Expressed primarily in the mantle with highest level in the mantle edge and lower level in the mantle pallium.

It is found in the secreted. The polypeptide is Asparagine-rich protein (Margaritifera margaritifera (Freshwater pearl mussel)).